Here is a 69-residue protein sequence, read N- to C-terminus: uncharacterized protein (69 aa).

This is an uncharacterized protein from Escherichia coli O157:H7.